The sequence spans 439 residues: Maintenance of mitochondrial morphology protein 1 (439 aa).

Residues 1 to 76 (MSQDLIETTA…NGNTWSFTQG (76 aa)) lie on the Lumenal side of the membrane. The helical transmembrane segment at 77–97 (LVIGQVSVIFIIIVFVKFFVF) threads the bilayer. Residues 98 to 439 (ADSSSHIPTK…TPGEYVNSNI (342 aa)) lie on the Cytoplasmic side of the membrane. Disordered stretches follow at residues 125-145 (KHSN…SLDS), 309-336 (MNGY…DGGT), and 405-425 (REPV…GTSA). The SMP-LTD domain maps to 165–395 (ASESLDWFNV…EPRFQVVRLP (231 aa)). Low complexity-rich tracts occupy residues 315-326 (ENANGDGASSSN) and 410-424 (KKTT…NGTS).

This sequence belongs to the MMM1 family. As to quaternary structure, homodimer. Component of the ER-mitochondria encounter structure (ERMES) or MDM complex, composed of MMM1, MDM10, MDM12 and MDM34. An MMM1 homodimer associates with one molecule of MDM12 on each side in a pairwise head-to-tail manner, and the SMP-LTD domains of MMM1 and MDM12 generate a continuous hydrophobic tunnel for phospholipid trafficking.

It localises to the endoplasmic reticulum membrane. Functionally, component of the ERMES/MDM complex, which serves as a molecular tether to connect the endoplasmic reticulum (ER) and mitochondria. Components of this complex are involved in the control of mitochondrial shape and protein biogenesis, and function in nonvesicular lipid trafficking between the ER and mitochondria. The MDM12-MMM1 subcomplex functions in the major beta-barrel assembly pathway that is responsible for biogenesis of all outer membrane beta-barrel proteins, and acts in a late step after the SAM complex. The MDM10-MDM12-MMM1 subcomplex further acts in the TOM40-specific pathway after the action of the MDM12-MMM1 complex. Essential for establishing and maintaining the structure of mitochondria and maintenance of mtDNA nucleoids. The chain is Maintenance of mitochondrial morphology protein 1 from Candida albicans (strain WO-1) (Yeast).